We begin with the raw amino-acid sequence, 1006 residues long: Zinc finger protein ZFPM1 (1006 aa).

Positions methionine 1–lysine 13 are enriched in basic residues. Disordered stretches follow at residues methionine 1–glutamate 93 and serine 114–glutamate 133. Over residues serine 15–valine 25 the composition is skewed to basic and acidic residues. The span at alanine 42–proline 62 shows a compositional bias: pro residues. A compositionally biased stretch (basic and acidic residues) spans lysine 66–glutamate 79. Residues serine 84 and serine 128 each carry the phosphoserine modification. A compositionally biased stretch (polar residues) spans serine 121–arginine 130. Residues valine 235–glutamine 268 form a CCHC FOG-type 1 zinc finger. Zn(2+) contacts are provided by cysteine 243, cysteine 246, histidine 259, and cysteine 264. Serine 272 carries the post-translational modification Phosphoserine. 3 C2H2-type zinc fingers span residues arginine 290 to histidine 314, phenylalanine 320 to histidine 342, and glycine 348 to histidine 371. Positions threonine 330–valine 341 are interaction with TACC3. Serine 384 is modified (phosphoserine). Disordered regions lie at residues serine 384–leucine 409, asparagine 438–arginine 460, and alanine 473–proline 515. Residues alanine 485–proline 515 show a composition bias toward low complexity. Residues serine 491 and serine 494 each carry the phosphoserine modification. The CCHC FOG-type 2 zinc-finger motif lies at proline 571–arginine 604. 4 residues coordinate Zn(2+): cysteine 579, cysteine 582, histidine 595, and cysteine 600. Positions alanine 605–serine 681 are disordered. Positions alanine 617–proline 629 are enriched in pro residues. 2 positions are modified to phosphoserine: serine 638 and serine 671. The CCHC FOG-type 3 zinc finger occupies glutamate 677–histidine 710. Cysteine 685, cysteine 688, histidine 701, and cysteine 706 together coordinate Zn(2+). Residues serine 708–alanine 810 are disordered. 2 stretches are compositionally biased toward pro residues: residues arginine 715–alanine 735 and alanine 754–proline 769. The segment covering glycine 780–alanine 791 has biased composition (low complexity). Serine 786 is modified (phosphoserine). The segment at proline 794–lysine 800 is interaction with CTBP2. The CCHC FOG-type 4 zinc-finger motif lies at proline 811–proline 844. The Zn(2+) site is built by cysteine 819, cysteine 822, histidine 835, and cysteine 840. The segment at alanine 854–histidine 877 adopts a C2H2-type 4 zinc-finger fold. The tract at residues glycine 889–glycine 971 is disordered. Serine 901, serine 909, serine 914, and serine 935 each carry phosphoserine. Over residues proline 925–proline 950 the composition is skewed to pro residues. Residues leucine 968 to alanine 1001 form a CCHC FOG-type 5 zinc finger. Cysteine 976, cysteine 979, histidine 992, and cysteine 997 together coordinate Zn(2+).

It belongs to the FOG (Friend of GATA) family. As to quaternary structure, interacts with corepressor CTBP2; this interaction is however not essential for corepressor activity. Interacts with the N-terminal zinc-finger of GATA1, GATA2 and probably GATA3. As to expression, mainly expressed in hematopoietic tissues. Also expressed in adult cerebellum, stomach, lymph node, liver and pancreas. Expressed in fetal heart, liver and spleen.

Its subcellular location is the nucleus. Its function is as follows. Transcription regulator that plays an essential role in erythroid and megakaryocytic cell differentiation. Essential cofactor that acts via the formation of a heterodimer with transcription factors of the GATA family GATA1, GATA2 and GATA3. Such heterodimer can both activate or repress transcriptional activity, depending on the cell and promoter context. The heterodimer formed with GATA proteins is essential to activate expression of genes such as NFE2, ITGA2B, alpha- and beta-globin, while it represses expression of KLF1. May be involved in regulation of some genes in gonads. May also be involved in cardiac development, in a non-redundant way with ZFPM2/FOG2. The chain is Zinc finger protein ZFPM1 (ZFPM1) from Homo sapiens (Human).